A 470-amino-acid polypeptide reads, in one-letter code: 3-isopropylmalate dehydratase large subunit (470 aa).

Cysteine 346, cysteine 406, and cysteine 409 together coordinate [4Fe-4S] cluster.

Belongs to the aconitase/IPM isomerase family. LeuC type 1 subfamily. Heterodimer of LeuC and LeuD. [4Fe-4S] cluster is required as a cofactor.

It catalyses the reaction (2R,3S)-3-isopropylmalate = (2S)-2-isopropylmalate. It participates in amino-acid biosynthesis; L-leucine biosynthesis; L-leucine from 3-methyl-2-oxobutanoate: step 2/4. In terms of biological role, catalyzes the isomerization between 2-isopropylmalate and 3-isopropylmalate, via the formation of 2-isopropylmaleate. The polypeptide is 3-isopropylmalate dehydratase large subunit (Shouchella clausii (strain KSM-K16) (Alkalihalobacillus clausii)).